The following is a 419-amino-acid chain: 2-amino-3-ketobutyrate coenzyme A ligase, mitochondrial (419 aa).

The N-terminal 21 residues, 1 to 21 (MWPGNAWRAALFWVPRGRRAQ), are a transit peptide targeting the mitochondrion. Lys45 is subject to N6-acetyllysine; alternate. N6-succinyllysine; alternate is present on Lys45. Position 134–135 (134–135 (CY)) interacts with pyridoxal 5'-phosphate. Residue His159 coordinates substrate. Lys187 bears the N6-acetyllysine; alternate mark. An N6-succinyllysine; alternate modification is found at Lys187. Pyridoxal 5'-phosphate-binding positions include Ser206, 262-265 (TLGK), and 295-296 (SN). Lys265 is subject to N6-(pyridoxal phosphate)lysine. N6-succinyllysine occurs at positions 326 and 368. N6-acetyllysine; alternate is present on Lys383. Lys383 bears the N6-succinyllysine; alternate mark. Arg389 serves as a coordination point for substrate.

It belongs to the class-II pyridoxal-phosphate-dependent aminotransferase family. It depends on pyridoxal 5'-phosphate as a cofactor. As to expression, strongly expressed in heart, brain, liver and pancreas. Also found in lung.

It localises to the mitochondrion. The protein resides in the nucleus. It carries out the reaction glycine + acetyl-CoA = (2S)-2-amino-3-oxobutanoate + CoA. Its function is as follows. Pyridoxal phosphate (PLP) dependent enzyme, which catalyzes the cleavage of 2-amino-3-oxobutanoate to glycine and acetyl-CoA. This is 2-amino-3-ketobutyrate coenzyme A ligase, mitochondrial from Homo sapiens (Human).